A 244-amino-acid polypeptide reads, in one-letter code: Glucosamine-6-phosphate deaminase (244 aa).

Aspartate 67 acts as the Proton acceptor; for enolization step in catalysis. The active-site For ring-opening step is the asparagine 136. Histidine 138 functions as the Proton acceptor; for ring-opening step in the catalytic mechanism. Catalysis depends on glutamate 143, which acts as the For ring-opening step.

Belongs to the glucosamine/galactosamine-6-phosphate isomerase family. NagB subfamily.

It catalyses the reaction alpha-D-glucosamine 6-phosphate + H2O = beta-D-fructose 6-phosphate + NH4(+). It participates in amino-sugar metabolism; N-acetylneuraminate degradation; D-fructose 6-phosphate from N-acetylneuraminate: step 5/5. Catalyzes the reversible isomerization-deamination of glucosamine 6-phosphate (GlcN6P) to form fructose 6-phosphate (Fru6P) and ammonium ion. This Clostridium botulinum (strain Okra / Type B1) protein is Glucosamine-6-phosphate deaminase.